The sequence spans 425 residues: Serine--tRNA ligase (425 aa).

An L-serine-binding site is contributed by 231–233 (TAE). 262–264 (RSE) is a binding site for ATP. Glu285 provides a ligand contact to L-serine. 349–352 (EISS) is a binding site for ATP. Ser385 contacts L-serine.

It belongs to the class-II aminoacyl-tRNA synthetase family. Type-1 seryl-tRNA synthetase subfamily. As to quaternary structure, homodimer. The tRNA molecule binds across the dimer.

It is found in the cytoplasm. The enzyme catalyses tRNA(Ser) + L-serine + ATP = L-seryl-tRNA(Ser) + AMP + diphosphate + H(+). The catalysed reaction is tRNA(Sec) + L-serine + ATP = L-seryl-tRNA(Sec) + AMP + diphosphate + H(+). The protein operates within aminoacyl-tRNA biosynthesis; selenocysteinyl-tRNA(Sec) biosynthesis; L-seryl-tRNA(Sec) from L-serine and tRNA(Sec): step 1/1. Its function is as follows. Catalyzes the attachment of serine to tRNA(Ser). Is also able to aminoacylate tRNA(Sec) with serine, to form the misacylated tRNA L-seryl-tRNA(Sec), which will be further converted into selenocysteinyl-tRNA(Sec). The polypeptide is Serine--tRNA ligase (Bartonella tribocorum (strain CIP 105476 / IBS 506)).